A 248-amino-acid polypeptide reads, in one-letter code: Anamorsin homolog (248 aa).

Residues 4 to 130 (FKGLQKSLYI…ETGSSARLSF (127 aa)) are N-terminal SAM-like domain. The interval 131–161 (AKKSPSMNVWKISGDDEELIDEEELLDEEDK) is linker. Positions 172, 181, 184, and 186 each coordinate [2Fe-2S] cluster. Residues 172–186 (CSTTGKRKACKNCSC) are fe-S binding site A. Positions 209, 212, 220, and 223 each coordinate [4Fe-4S] cluster. 2 consecutive short sequence motifs (cx2C motif) follow at residues 209–212 (CGNC) and 220–223 (CSTC). The segment at 209–223 (CGNCYLGDAFRCSTC) is fe-S binding site B.

It belongs to the anamorsin family. Monomer. Requires [2Fe-2S] cluster as cofactor. [4Fe-4S] cluster is required as a cofactor.

The protein resides in the cytoplasm. Its subcellular location is the mitochondrion intermembrane space. Functionally, component of the cytosolic iron-sulfur (Fe-S) protein assembly (CIA) machinery. Required for the maturation of extramitochondrial Fe-S proteins. Part of an electron transfer chain functioning in an early step of cytosolic Fe-S biogenesis, facilitating the de novo assembly of a [4Fe-4S] cluster on the cytosolic Fe-S scaffold complex. Electrons are transferred from NADPH via a FAD- and FMN-containing diflavin oxidoreductase. Together with the diflavin oxidoreductase, also required for the assembly of the diferric tyrosyl radical cofactor of ribonucleotide reductase (RNR), probably by providing electrons for reduction during radical cofactor maturation in the catalytic small subunit. The chain is Anamorsin homolog from Drosophila mojavensis (Fruit fly).